The primary structure comprises 163 residues: Putative pre-16S rRNA nuclease (163 aa).

Belongs to the YqgF nuclease family.

It localises to the cytoplasm. Its function is as follows. Could be a nuclease involved in processing of the 5'-end of pre-16S rRNA. The chain is Putative pre-16S rRNA nuclease from Rhodopseudomonas palustris (strain BisA53).